Consider the following 155-residue polypeptide: Large ribosomal subunit protein uL22c (155 aa).

This sequence belongs to the universal ribosomal protein uL22 family. In terms of assembly, part of the 50S ribosomal subunit.

The protein resides in the plastid. It is found in the chloroplast. This protein binds specifically to 23S rRNA. Its function is as follows. The globular domain of the protein is located near the polypeptide exit tunnel on the outside of the subunit, while an extended beta-hairpin is found that lines the wall of the exit tunnel in the center of the 70S ribosome. This is Large ribosomal subunit protein uL22c (rpl22) from Solanum bulbocastanum (Wild potato).